The chain runs to 148 residues: NADPH-dependent 7-cyano-7-deazaguanine reductase (148 aa).

Catalysis depends on C50, which acts as the Thioimide intermediate. D57 functions as the Proton donor in the catalytic mechanism. Substrate is bound by residues 72-74 (VES) and 91-92 (HE).

The protein belongs to the GTP cyclohydrolase I family. QueF type 1 subfamily.

It is found in the cytoplasm. It carries out the reaction 7-aminomethyl-7-carbaguanine + 2 NADP(+) = 7-cyano-7-deazaguanine + 2 NADPH + 3 H(+). Its pathway is tRNA modification; tRNA-queuosine biosynthesis. In terms of biological role, catalyzes the NADPH-dependent reduction of 7-cyano-7-deazaguanine (preQ0) to 7-aminomethyl-7-deazaguanine (preQ1). The sequence is that of NADPH-dependent 7-cyano-7-deazaguanine reductase from Helicobacter pylori (strain P12).